The sequence spans 285 residues: Nucleotide-binding protein in ptsN-ptsO intergenic region (285 aa).

8-15 (GRSGSGKS) serves as a coordination point for ATP. A GTP-binding site is contributed by 60 to 63 (DARN).

The protein belongs to the RapZ-like family.

Its function is as follows. Displays ATPase and GTPase activities. The sequence is that of Nucleotide-binding protein in ptsN-ptsO intergenic region from Stutzerimonas stutzeri (Pseudomonas stutzeri).